The sequence spans 244 residues: UPF0246 protein FMG_1068 (244 aa).

The protein belongs to the UPF0246 family.

The chain is UPF0246 protein FMG_1068 from Finegoldia magna (strain ATCC 29328 / DSM 20472 / WAL 2508) (Peptostreptococcus magnus).